Reading from the N-terminus, the 2058-residue chain is E3 ubiquitin-protein ligase ubr-1 (2058 aa).

A UBR-type zinc finger spans residues 93–164 (QICGHVFKNG…EGYACANHEK (72 aa)). Positions 1107-1175 (VPEAAPAPEN…TPSEKSETVV (69 aa)) are disordered. A compositionally biased stretch (low complexity) spans 1108-1119 (PEAAPAPENKPA). 2 stretches are compositionally biased toward basic and acidic residues: residues 1123 to 1138 (EEIKAKRAARAAEMRQ) and 1153 to 1175 (KKIEDEEKKDESQTPSEKSETVV). The segment at 1217–1335 (LTCILCQEDE…GEYQCPLCKR (119 aa)) adopts an RING-type; atypical zinc-finger fold. 2 disordered regions span residues 1381–1416 (LSSESVSKKGHSRKRSHSERSLLDLEKLSKDPDTAN) and 1475–1499 (PAATPETIPAIGSSSRIPESQESGK). The span at 1388 to 1397 (KKGHSRKRSH) shows a compositional bias: basic residues. Basic and acidic residues predominate over residues 1398–1413 (SERSLLDLEKLSKDPD). Positions 1486-1495 (GSSSRIPESQ) are enriched in polar residues. The helical transmembrane segment at 1695 to 1715 (ILQIDILSLAISLMMTIGWTW) threads the bilayer.

Belongs to the E3 ubiquitin-protein ligase UBR1-like family. In terms of assembly, interacts with ubc-1. Component of a complex containing at least ced-3, ubr-1 and possibly ate-1. Within complex interacts with ced-3 (via the p17 subunit); this interaction is required for the ced-3-mediated cleavage and subsequent degradation of the heterochronic protein lin-28. In terms of tissue distribution, expressed in pharyngeal muscles, body wall muscles and a subset of neurons throughout postembryonic development. Prominently expressed in premotor interneurons, but not expressed in ventral cord motor neurons. Weakly expressed in hypodermal seam cells.

The protein resides in the membrane. The enzyme catalyses S-ubiquitinyl-[E2 ubiquitin-conjugating enzyme]-L-cysteine + [acceptor protein]-L-lysine = [E2 ubiquitin-conjugating enzyme]-L-cysteine + N(6)-ubiquitinyl-[acceptor protein]-L-lysine.. Its pathway is protein modification; protein ubiquitination. Functionally, E3 ubiquitin-protein ligase which is a component of the N-end rule pathway. Recognizes and binds to proteins bearing specific N-terminal residues that are destabilizing according to the N-end rule, leading to their ubiquitination and subsequent degradation. In complex with ced-3, required for the ced-3-mediated cleavage and subsequent degradation of the heterochronic protein lin-28 to regulate seam cell fate patterning during larval development. Negatively regulates glutamate metabolism through the aspartate aminotransferase got-1.2. Modulation of glutamate levels most likely controls locomotory behavior, in particular backwards locomotion or 'reversals'. The sequence is that of E3 ubiquitin-protein ligase ubr-1 from Caenorhabditis elegans.